Consider the following 160-residue polypeptide: Epithelial membrane protein 1 (160 aa).

A helical membrane pass occupies residues 1–21 (MLVLLAAIFVVHIATCVMLFV). Asparagine 35 and asparagine 43 each carry an N-linked (GlcNAc...) asparagine glycan. Helical transmembrane passes span 67 to 87 (FMIL…FQLF), 95 to 115 (FFLS…GASI), and 137 to 157 (FILA…YLVL).

Belongs to the PMP-22/EMP/MP20 family. Most abundant in squamous epithelia.

It is found in the membrane. The protein is Epithelial membrane protein 1 (EMP1) of Oryctolagus cuniculus (Rabbit).